Reading from the N-terminus, the 339-residue chain is Phenylalanine--tRNA ligase alpha subunit (339 aa).

Glu-253 serves as a coordination point for Mg(2+).

This sequence belongs to the class-II aminoacyl-tRNA synthetase family. Phe-tRNA synthetase alpha subunit type 1 subfamily. In terms of assembly, tetramer of two alpha and two beta subunits. Mg(2+) serves as cofactor.

It localises to the cytoplasm. It carries out the reaction tRNA(Phe) + L-phenylalanine + ATP = L-phenylalanyl-tRNA(Phe) + AMP + diphosphate + H(+). This chain is Phenylalanine--tRNA ligase alpha subunit, found in Ruthia magnifica subsp. Calyptogena magnifica.